A 251-amino-acid chain; its full sequence is Probable transcriptional regulatory protein jk1057 (251 aa).

The segment at 1–22 (MAGHSKWATTKHKKAANDAKRG) is disordered.

The protein belongs to the TACO1 family.

The protein localises to the cytoplasm. This Corynebacterium jeikeium (strain K411) protein is Probable transcriptional regulatory protein jk1057.